The following is a 222-amino-acid chain: UPF0128 protein PYRAB08320 (222 aa).

It belongs to the UPF0128 family.

The sequence is that of UPF0128 protein PYRAB08320 from Pyrococcus abyssi (strain GE5 / Orsay).